We begin with the raw amino-acid sequence, 294 residues long: Acetyl-coenzyme A carboxylase carboxyl transferase subunit beta (294 aa).

Positions Val25–Asp294 constitute a CoA carboxyltransferase N-terminal domain. Zn(2+) contacts are provided by Cys29, Cys32, Cys48, and Cys51. A C4-type zinc finger spans residues Cys29 to Cys51.

This sequence belongs to the AccD/PCCB family. Acetyl-CoA carboxylase is a heterohexamer composed of biotin carboxyl carrier protein (AccB), biotin carboxylase (AccC) and two subunits each of ACCase subunit alpha (AccA) and ACCase subunit beta (AccD). Zn(2+) is required as a cofactor.

Its subcellular location is the cytoplasm. The enzyme catalyses N(6)-carboxybiotinyl-L-lysyl-[protein] + acetyl-CoA = N(6)-biotinyl-L-lysyl-[protein] + malonyl-CoA. It functions in the pathway lipid metabolism; malonyl-CoA biosynthesis; malonyl-CoA from acetyl-CoA: step 1/1. Component of the acetyl coenzyme A carboxylase (ACC) complex. Biotin carboxylase (BC) catalyzes the carboxylation of biotin on its carrier protein (BCCP) and then the CO(2) group is transferred by the transcarboxylase to acetyl-CoA to form malonyl-CoA. This chain is Acetyl-coenzyme A carboxylase carboxyl transferase subunit beta, found in Actinobacillus succinogenes (strain ATCC 55618 / DSM 22257 / CCUG 43843 / 130Z).